Here is a 1022-residue protein sequence, read N- to C-terminus: Protein trachealess (1022 aa).

The bHLH domain occupies 86–139 (LRKEKSRDAARSRRGKENYEFYELAKMLPLPAAITSQLDKASIIRLTISYLKLR). One can recognise a PAS 1 domain in the interval 174 to 244 (EQHQGTHILQ…DQLGLSLTSG (71 aa)). Residues 239-289 (LSLTSGGGGGGGSSSSGGGGGGAGGGMASPTSGASDDGSGTHGTNNPDVAA) form a disordered region. Residues 243-265 (SGGGGGGGSSSSGGGGGGAGGGM) are compositionally biased toward gly residues. The span at 280–289 (HGTNNPDVAA) shows a compositional bias: polar residues. One can recognise a PAS 2 domain in the interval 391 to 461 (PPPSVHEIRL…KSHSDLIEKG (71 aa)). The region spanning 465 to 508 (TGYYRLMNKSGGYTWLQTCATVVCSTKNADEQNIICVNYVISNR) is the PAC domain. Disordered stretches follow at residues 525–686 (DSIK…ADSA), 849–896 (AMTP…GDVV), and 962–996 (DDQG…ASQA). 2 stretches are compositionally biased toward low complexity: residues 578-587 (RSAAASHGSS) and 611-625 (PTTV…TPPV). The short motif at 629–636 (KRKRKTKA) is the Nuclear localization signal element. Position 673 is a phosphoserine; by PKB/Akt1 (Ser-673). Positions 851 to 864 (TPPSSVSPRDSNQP) are enriched in polar residues. Positions 987–996 (GSAGSSASQA) are enriched in low complexity.

As to quaternary structure, efficient DNA binding requires dimerization with another bHLH protein. Heterodimer with tgo. Post-translationally, ser-673 phosphorylation by PKB/Akt1 is required for nuclear targeting and transcriptional activity. Trachea, salivary gland ducts, posterior spiracles (Filzkoeper primordia) and a subset of cells in the CNS.

It localises to the nucleus. Transcription factor, master regulator of tracheal cell fates in the embryo, necessary for the development of the salivary gland duct, Malpighian tubules and the posterior spiracles. It may induce a general fate of branched tubular structures of epithelial origin. Functions with tgo to regulate expression of btl. This is Protein trachealess (trh) from Drosophila melanogaster (Fruit fly).